Consider the following 442-residue polypeptide: Tubulin beta chain (442 aa).

8 residues coordinate GTP: Gln-11, Glu-69, Ser-138, Gly-142, Thr-143, Gly-144, Asn-204, and Asn-226. Glu-69 is a Mg(2+) binding site. Positions 421–442 (EYQQYQDATAEDEEEMDEEQME) are disordered. Residues 429-442 (TAEDEEEMDEEQME) are compositionally biased toward acidic residues.

This sequence belongs to the tubulin family. Dimer of alpha and beta chains. A typical microtubule is a hollow water-filled tube with an outer diameter of 25 nm and an inner diameter of 15 nM. Alpha-beta heterodimers associate head-to-tail to form protofilaments running lengthwise along the microtubule wall with the beta-tubulin subunit facing the microtubule plus end conferring a structural polarity. Microtubules usually have 13 protofilaments but different protofilament numbers can be found in some organisms and specialized cells. The cofactor is Mg(2+).

It is found in the cytoplasm. It localises to the cytoskeleton. Tubulin is the major constituent of microtubules, a cylinder consisting of laterally associated linear protofilaments composed of alpha- and beta-tubulin heterodimers. Microtubules grow by the addition of GTP-tubulin dimers to the microtubule end, where a stabilizing cap forms. Below the cap, tubulin dimers are in GDP-bound state, owing to GTPase activity of alpha-tubulin. The polypeptide is Tubulin beta chain (TUBB1) (Stylonychia lemnae (Ciliate)).